The sequence spans 101 residues: Gamma-secretase subunit PEN-2 (101 aa).

The Cytoplasmic segment spans residues 1–17 (MNLERVSNEEKLNLCRK). Positions 18–36 (YYLGGFAFLPFLWLVNIFW) form an intramembrane region, helical. Topologically, residues 37-57 (FFREAFLAPAYTEQSQIKGYV) are cytoplasmic. A helical membrane pass occupies residues 58-78 (WRSAVGFLFWVIILATWITIF). Residues 79–101 (QIYRPRWGALGDYLSFTIPLGTP) lie on the Lumenal side of the membrane.

It belongs to the PEN-2 family. In terms of assembly, the functional gamma-secretase complex is composed of at least four polypeptides: a presenilin homodimer (PSEN1 or PSEN2), nicastrin (NCSTN), APH1 (APH1A or APH1B) and PSENEN.

It localises to the endoplasmic reticulum membrane. The protein resides in the golgi apparatus. The protein localises to the golgi stack membrane. It is found in the cell membrane. Its subcellular location is the membrane. Essential subunit of the gamma-secretase complex, an endoprotease complex that catalyzes the intramembrane cleavage of integral membrane proteins such as Notch receptors and APP (amyloid-beta precursor protein). The gamma-secretase complex plays a role in Notch and Wnt signaling cascades and regulation of downstream processes via its role in processing key regulatory proteins, and by regulating cytosolic CTNNB1 levels. PSENEN modulates both endoproteolysis of presenilin and gamma-secretase activity. This Mus musculus (Mouse) protein is Gamma-secretase subunit PEN-2 (Psenen).